The primary structure comprises 230 residues: MIIKKNIKRAEFIKRPNRFQAYVKVDNEEIMVHVPNTGRCKEILIPGTTVVLREESNPTRKTKYDLIGGYKNGKFINIDSQIPNKVVEEALKLGNIKKLKKYNIIKREKTYGNSRFDFKLGNDSGEEYYLEVKGVTLEDGGVTKFPDAPTERGTKHILELIDVKNKGIGAGVLFLIQMKDVKYFTPNIEMDKNFSEALVSAHKAGVDIFAYECDVDEDFITLKKEVKVIL.

It belongs to the SfsA family.

The protein is Sugar fermentation stimulation protein homolog of Clostridium tetani (strain Massachusetts / E88).